The chain runs to 475 residues: Ribulose bisphosphate carboxylase large chain (475 aa).

The propeptide occupies 1–2 (MS). At Pro-3 the chain carries N-acetylproline. Lys-14 carries the post-translational modification N6,N6,N6-trimethyllysine. Substrate contacts are provided by Asn-123 and Thr-173. The Proton acceptor role is filled by Lys-175. Lys-177 contributes to the substrate binding site. Residues Lys-201, Asp-203, and Glu-204 each contribute to the Mg(2+) site. An N6-carboxylysine modification is found at Lys-201. His-294 acts as the Proton acceptor in catalysis. Substrate contacts are provided by Arg-295, His-327, and Ser-379.

This sequence belongs to the RuBisCO large chain family. Type I subfamily. In terms of assembly, heterohexadecamer of 8 large chains and 8 small chains; disulfide-linked. The disulfide link is formed within the large subunit homodimers. Requires Mg(2+) as cofactor. Post-translationally, the disulfide bond which can form in the large chain dimeric partners within the hexadecamer appears to be associated with oxidative stress and protein turnover.

The protein localises to the plastid. It is found in the chloroplast. It catalyses the reaction 2 (2R)-3-phosphoglycerate + 2 H(+) = D-ribulose 1,5-bisphosphate + CO2 + H2O. The enzyme catalyses D-ribulose 1,5-bisphosphate + O2 = 2-phosphoglycolate + (2R)-3-phosphoglycerate + 2 H(+). Functionally, ruBisCO catalyzes two reactions: the carboxylation of D-ribulose 1,5-bisphosphate, the primary event in carbon dioxide fixation, as well as the oxidative fragmentation of the pentose substrate in the photorespiration process. Both reactions occur simultaneously and in competition at the same active site. This is Ribulose bisphosphate carboxylase large chain from Anthoceros angustus (Hornwort).